The sequence spans 335 residues: Beta-ketoacyl-[acyl-carrier-protein] synthase III (335 aa).

Active-site residues include C116 and H256. The interval 257 to 261 (QANLR) is ACP-binding. N286 is an active-site residue.

Belongs to the thiolase-like superfamily. FabH family. In terms of assembly, homodimer.

The protein localises to the cytoplasm. The catalysed reaction is malonyl-[ACP] + acetyl-CoA + H(+) = 3-oxobutanoyl-[ACP] + CO2 + CoA. It participates in lipid metabolism; fatty acid biosynthesis. Its function is as follows. Catalyzes the condensation reaction of fatty acid synthesis by the addition to an acyl acceptor of two carbons from malonyl-ACP. Catalyzes the first condensation reaction which initiates fatty acid synthesis and may therefore play a role in governing the total rate of fatty acid production. Possesses both acetoacetyl-ACP synthase and acetyl transacylase activities. Its substrate specificity determines the biosynthesis of branched-chain and/or straight-chain of fatty acids. The polypeptide is Beta-ketoacyl-[acyl-carrier-protein] synthase III (Porphyromonas gingivalis (strain ATCC 33277 / DSM 20709 / CIP 103683 / JCM 12257 / NCTC 11834 / 2561)).